The following is a 159-amino-acid chain: Phosphopantetheine adenylyltransferase (159 aa).

Thr-10 contacts substrate. Residues 10-11 (TF) and His-18 each bind ATP. 3 residues coordinate substrate: Lys-42, Met-74, and Arg-88. ATP is bound by residues 89 to 91 (GLR), Glu-99, and 124 to 130 (WSFISSS).

The protein belongs to the bacterial CoaD family. In terms of assembly, homohexamer. Requires Mg(2+) as cofactor.

Its subcellular location is the cytoplasm. It carries out the reaction (R)-4'-phosphopantetheine + ATP + H(+) = 3'-dephospho-CoA + diphosphate. Its pathway is cofactor biosynthesis; coenzyme A biosynthesis; CoA from (R)-pantothenate: step 4/5. Its function is as follows. Reversibly transfers an adenylyl group from ATP to 4'-phosphopantetheine, yielding dephospho-CoA (dPCoA) and pyrophosphate. This Citrobacter koseri (strain ATCC BAA-895 / CDC 4225-83 / SGSC4696) protein is Phosphopantetheine adenylyltransferase.